Consider the following 215-residue polypeptide: MRRVVGKRVLEFSEAEFDQLRSQYDEVVLDVGTGDGKHPYKVARQHPNQLVVALDADKTRMERMSAKAAAKPAKGGLPNLLYLWATAEKLPPLTGVGELHVLMPWGSLLRGILGSSPEMLRGLAAVCRPDAAFLVALNLHAWRPPVPEVGEHPEPTPETVDEGLAARYAQAGWQLTDCRYLAAEEVAALETSWTRRLNSSRDRFDVLALTGKINP.

S-adenosyl-L-methionine-binding positions include Gly32, Asp55, 87–88 (AE), 102–107 (LMPWGS), and 191–193 (TSW).

This sequence belongs to the methyltransferase superfamily. Kanamycin-apramycin resistance family.

It carries out the reaction adenosine(1408) in 16S rRNA + S-adenosyl-L-methionine = N(1)-methyladenosine(1408) in 16S rRNA + S-adenosyl-L-homocysteine + H(+). Specifically methylates the N(1) position of adenine 1408 in 16S rRNA. Confers resistance to various aminoglycosides. This chain is 16S rRNA (adenine(1408)-N(1))-methyltransferase (kamB), found in Streptoalloteichus hindustanus.